A 336-amino-acid polypeptide reads, in one-letter code: Sex determination protein tasselseed-2 (336 aa).

59 to 83 (IVTGGARGIGEAIVRLFAKHGARVV) contributes to the NAD(+) binding site. Substrate is bound at residue Ser194. Tyr207 acts as the Proton acceptor in catalysis.

The protein belongs to the short-chain dehydrogenases/reductases (SDR) family.

Required for stage-specific floral organ abortion. This chain is Sex determination protein tasselseed-2 (TS2), found in Zea mays (Maize).